Consider the following 465-residue polypeptide: Soluble pyridine nucleotide transhydrogenase (465 aa).

35–44 contacts FAD; that stretch reads ERYNNVGGGC.

The protein belongs to the class-I pyridine nucleotide-disulfide oxidoreductase family. It depends on FAD as a cofactor.

The protein resides in the cytoplasm. The enzyme catalyses NAD(+) + NADPH = NADH + NADP(+). Conversion of NADPH, generated by peripheral catabolic pathways, to NADH, which can enter the respiratory chain for energy generation. In Photorhabdus laumondii subsp. laumondii (strain DSM 15139 / CIP 105565 / TT01) (Photorhabdus luminescens subsp. laumondii), this protein is Soluble pyridine nucleotide transhydrogenase.